Reading from the N-terminus, the 410-residue chain is Cytochrome P450(MEG) (410 aa).

A heme-binding site is contributed by Cys-355.

Belongs to the cytochrome P450 family. Requires heme as cofactor.

Its subcellular location is the cytoplasm. It catalyses the reaction reduced 2[4Fe-4S]-[ferredoxin] + progesterone + O2 + 2 H(+) = 15beta-hydroxyprogesterone + oxidized 2[4Fe-4S]-[ferredoxin] + H2O. Functionally, has the capacity to hydroxylate certain steroids in the 15-beta position. Also hydroxylates progesterone in the 11-alpha and 9-beta position. This is Cytochrome P450(MEG) (cyp106A2) from Priestia megaterium (Bacillus megaterium).